A 334-amino-acid polypeptide reads, in one-letter code: 7,8-didemethyl-8-hydroxy-5-deazariboflavin synthase (334 aa).

One can recognise a Radical SAM core domain in the interval 2 to 248 (VSYSKNVFVP…PDVPVQVPPN (247 aa)). [4Fe-4S] cluster contacts are provided by C16, C20, and C23.

The protein belongs to the radical SAM superfamily. CofG family. Consists of two subunits, CofG and CofH. [4Fe-4S] cluster serves as cofactor.

The catalysed reaction is 5-amino-5-(4-hydroxybenzyl)-6-(D-ribitylimino)-5,6-dihydrouracil + S-adenosyl-L-methionine = 7,8-didemethyl-8-hydroxy-5-deazariboflavin + 5'-deoxyadenosine + L-methionine + NH4(+) + H(+). It functions in the pathway cofactor biosynthesis; coenzyme F0 biosynthesis. Functionally, catalyzes the radical-mediated synthesis of 7,8-didemethyl-8-hydroxy-5-deazariboflavin from 5-amino-5-(4-hydroxybenzyl)-6-(D-ribitylimino)-5,6-dihydrouracil. The polypeptide is 7,8-didemethyl-8-hydroxy-5-deazariboflavin synthase (Methanopyrus kandleri (strain AV19 / DSM 6324 / JCM 9639 / NBRC 100938)).